Reading from the N-terminus, the 442-residue chain is Phosphoglucosamine mutase (442 aa).

Serine 98 functions as the Phosphoserine intermediate in the catalytic mechanism. Mg(2+) is bound by residues serine 98, aspartate 236, aspartate 238, and aspartate 240. Serine 98 is subject to Phosphoserine.

The protein belongs to the phosphohexose mutase family. Mg(2+) serves as cofactor. Post-translationally, activated by phosphorylation.

It catalyses the reaction alpha-D-glucosamine 1-phosphate = D-glucosamine 6-phosphate. Functionally, catalyzes the conversion of glucosamine-6-phosphate to glucosamine-1-phosphate. In Natranaerobius thermophilus (strain ATCC BAA-1301 / DSM 18059 / JW/NM-WN-LF), this protein is Phosphoglucosamine mutase.